The chain runs to 129 residues: Small ribosomal subunit protein uS9 (129 aa).

Belongs to the universal ribosomal protein uS9 family.

The sequence is that of Small ribosomal subunit protein uS9 from Chlorobium phaeobacteroides (strain DSM 266 / SMG 266 / 2430).